A 419-amino-acid polypeptide reads, in one-letter code: Gamma-glutamyl phosphate reductase (419 aa).

It belongs to the gamma-glutamyl phosphate reductase family.

Its subcellular location is the cytoplasm. It catalyses the reaction L-glutamate 5-semialdehyde + phosphate + NADP(+) = L-glutamyl 5-phosphate + NADPH + H(+). It participates in amino-acid biosynthesis; L-proline biosynthesis; L-glutamate 5-semialdehyde from L-glutamate: step 2/2. In terms of biological role, catalyzes the NADPH-dependent reduction of L-glutamate 5-phosphate into L-glutamate 5-semialdehyde and phosphate. The product spontaneously undergoes cyclization to form 1-pyrroline-5-carboxylate. The protein is Gamma-glutamyl phosphate reductase of Nitratidesulfovibrio vulgaris (strain DP4) (Desulfovibrio vulgaris).